The sequence spans 516 residues: Cytochrome P450 monooxygenase dtxS2 (516 aa).

A helical transmembrane segment spans residues 23-43 (ILASVIVLLGLKVATILYTAF). Asn187 carries an N-linked (GlcNAc...) asparagine glycan. Residues 229-249 (VLVPLLVFPYISWLLVWWLLS) traverse the membrane as a helical segment. Position 458 (Cys458) interacts with heme.

It belongs to the cytochrome P450 family. It depends on heme as a cofactor.

Its subcellular location is the membrane. It participates in secondary metabolite biosynthesis. Functionally, cytochrome P450 monooxygenase; part of the gene cluster that mediates the biosynthesis of destruxins, insecticidal cyclic hexadepsipeptides which induce flaccid paralysis and visceral muscle contraction in insects through targeting the calcium channels and vacuolar-type ATPases. The aldo-keto reductase dtxS3 converts alpha-ketoisocaproic acid from deaminated leucine into alpha-hydroxyisocaproic acid (HIC), which is the first substrate for destruxin assembly by dtxS1. L-aspartate decarboxylase dtxS4 converts aspartic acid into beta-alanine, the last substrate for the destruxin assembly line performed by dtxS1. The nonribosomal peptide synthetase dtxS1 synthesizes destruxins B and B2, whereas the cytochrome P450 monooxygenase dtxS2 is required to convert destruxin B into other destruxin derivatives, including destructins C, D, A and E. Destruxin E-diol (ED) is further produced in a non-enzymatic manner from destruxin E. Destruxins play an important role in virulence and escape from insect host immune defenses. In Metarhizium robertsii (strain ARSEF 23 / ATCC MYA-3075) (Metarhizium anisopliae (strain ARSEF 23)), this protein is Cytochrome P450 monooxygenase dtxS2.